The primary structure comprises 345 residues: S-adenosylmethionine:tRNA ribosyltransferase-isomerase (345 aa).

The protein belongs to the QueA family. Monomer.

It is found in the cytoplasm. It catalyses the reaction 7-aminomethyl-7-carbaguanosine(34) in tRNA + S-adenosyl-L-methionine = epoxyqueuosine(34) in tRNA + adenine + L-methionine + 2 H(+). Its pathway is tRNA modification; tRNA-queuosine biosynthesis. Functionally, transfers and isomerizes the ribose moiety from AdoMet to the 7-aminomethyl group of 7-deazaguanine (preQ1-tRNA) to give epoxyqueuosine (oQ-tRNA). In Shewanella sp. (strain ANA-3), this protein is S-adenosylmethionine:tRNA ribosyltransferase-isomerase.